The sequence spans 606 residues: Gamma-aminobutyric acid receptor subunit beta (606 aa).

The first 44 residues, 1–44, serve as a signal peptide directing secretion; sequence MSDSKMDKLARMAPLPRTPLLTIWLAINMALIAQETGHKRIHTV. The Extracellular segment spans residues 45–268; sequence QAATGGGSML…CEIQFVRSMG (224 aa). An N-linked (GlcNAc...) asparagine glycan is attached at N58. Cysteines 185 and 199 form a disulfide. N-linked (GlcNAc...) asparagine glycosylation is present at N253. Transmembrane regions (helical) follow at residues 269-291, 297-316, and 333-356; these read YYLI…SFWL, PARV…LMSS, and YLGT…YMAK. Residues 357–568 are Cytoplasmic-facing; the sequence is RIQMRKQRFM…LGITPSDIDK (212 aa). Disordered regions lie at residues 376–451 and 482–542; these read KQQL…VSNR and HDPK…AAVP. Residues 381–395 show a composition bias toward low complexity; the sequence is GANQQQANPNPNANV. Over residues 396-425 the composition is skewed to gly residues; that stretch reads GGPGGVGVGPGGPGGPGGGVNVGVGMGMGP. Positions 430–443 are enriched in basic residues; it reads GHGHHAHSHGHPHA. Positions 499-536 are enriched in gly residues; the sequence is GGRGGPQSHGPGPGQGGGPPGGGGGGGGGGGPPEGGGD. The chain crosses the membrane as a helical span at residues 569-590; sequence YSRIVFPVCFVCFNLMYWIIYL.

Belongs to the ligand-gated ion channel (TC 1.A.9) family. Gamma-aminobutyric acid receptor (TC 1.A.9.5) subfamily. In terms of assembly, forms oligomers. Interacts with Nlg4; the interaction mediates Rdl clustering. Interacts with Fbxl4; the interaction mediates Rdl degradation. Expressed in different parts of the brain: the mushroom bodies (alpha, alpha', beta, beta', gamma lobes and peduncles), the neurons projecting to the columnar-type neuron LC9 optic glomerulus, in interneurons connecting the paired olfactory lobes, antennal lobes, PDF-expressing small and large ventral lateral neurons (LNvs) of the circadian clock and lobula columnar neuron 11 (LC11) (at protein level). Expressed in all major ON pathway medulla neurons (Mi1, Tm3, Mi4, and Mi9) and in OFF pathway neurons (Tm1, Tm2, Tm4, and Tm9).

The protein localises to the cell membrane. The protein resides in the postsynaptic cell membrane. It is found in the cell projection. It localises to the dendrite. Its subcellular location is the axon. Its activity is regulated as follows. Activated by agonist muscimol. Insensitive to zinc, glycine, glutamate, and baclofen, loreclezole, to antagonist bicuculline, glycine-receptor antagonist strychnine, and nonselective GABA and glycine antagonist RU 5135. Insensitive to flunitrazepam, pentobarbitone or pregnane steroids such as 5alpha-pregnan-3alpha-ol-20-one. Inhibited by insecticides picrotoxin (PTX), cyclodiene dieldrin, TBPS and lindane. Inhibited by ivermectin, fipronil and pyrafluprole. Inhibited by insecticides picrotoxin (PTX). In terms of biological role, gamma-aminobutyric acid (GABA) receptor voltage channel subunit. GABA, an inhibitory neurotransmitter, mediates neuronal inhibition by binding to the GABA receptor and opening an integral chloride channel. Together with glutamate receptor GluClalpha, plays an important role in the visual response by regulating the activity of ON/OFF-selective neurons. Plays a role in promoting sleep and sleep latency by regulating the activity of peptidergic PDF neurons. In large ventral lateral clock neurons, clustering is mediated by Nlg4 and protein levels undergo daily degradation in response to the circadian clock. In neurons in the mushroom bodies, has a role in odor memory acquisition where it inhibits appetitive and aversive olfactory learning, probably upstream of Adcy1/adenylate cyclase 1 and GTPase activating protein Nf1. In male-specific GABAergic neurons, plays a role in inhibiting male aggressive behavior during courtship. Its function is as follows. Gamma-aminobutyric acid (GABA) receptor voltage channel subunit. This is Gamma-aminobutyric acid receptor subunit beta (Rdl) from Drosophila melanogaster (Fruit fly).